The primary structure comprises 323 residues: Transcription factor MYB56 (323 aa).

Residues 1–14 show a composition bias toward basic and acidic residues; that stretch reads MNPNLLEKDLRGKE. Residues 1–84 form a disordered region; it reads MNPNLLEKDL…EKSLRMRGKS (84 aa). Residues 27-60 are compositionally biased toward polar residues; it reads NFRSLPNSHTAACKTSLNNPSISRNHPHNKSASV. Over residues 66–78 the composition is skewed to basic and acidic residues; that stretch reads EHGNERGENEKSL. HTH myb-type domains follow at residues 88–139 and 140–194; these read TKVC…FNQL and DPRI…ARRT. 2 DNA-binding regions (H-T-H motif) span residues 116–138 and 167–190; these read WNLISNHLLGRSGKSCRLRWFNQ and WALISRLFPGRTDNAVKNHWHVIM. Residues 192–217 form a disordered region; the sequence is RRTRESQRQRQQPPPTLSRDAEMTVS.

In terms of assembly, forms homodimer. Interacts with the dephosphorylated active form of BES1 in the nucleus of quiescent center (QC) cells. Interacts with BPM1, BPM2, BPM3, BPM4, BPM5 and BPM6 at the promoter of FLOWERING LOCUS T (FT). Mostly expressed in flowers (at protein level) and siliques, and, to a lower extent, in roots, stems and leaves. Expressed in embryos (e.g. heart and torpedo stages) and cotyledons, and, at low levels, in roots and inflorescence. Accumulates specifically in root apical meristem quiescent center (QC) and vascular initial cells.

The protein resides in the nucleus. The protein localises to the cytoplasm. Its subcellular location is the cytosol. In terms of biological role, acts as a cell-specific local repressor of quiescent center (QC) self-renewal by cell divisions in the primary root. Counteracts brassinosteroid (BR)-mediated cell division in the QC cells. Regulates maternally seed size, especially before the heart stage, promoting both endothelial cells expansion and cell number in the outer integument layer of the seed coat. Modulates the expression of genes involved in cell wall metabolism such as cell division and expansion. Negative regulator of flowering via the repression of FT transcription. The chain is Transcription factor MYB56 from Arabidopsis thaliana (Mouse-ear cress).